A 332-amino-acid chain; its full sequence is Methionine synthase (332 aa).

Zn(2+)-binding residues include His-211, Cys-213, and Cys-296.

The protein belongs to the archaeal MetE family. Requires Zn(2+) as cofactor.

It participates in amino-acid biosynthesis; L-methionine biosynthesis via de novo pathway. Catalyzes the transfer of a methyl group to L-homocysteine resulting in methionine formation. The physiological methyl donor is unknown. This is Methionine synthase from Saccharolobus islandicus (strain Y.G.57.14 / Yellowstone #1) (Sulfolobus islandicus).